We begin with the raw amino-acid sequence, 134 residues long: DNA-binding protein inhibitor ID-2 (134 aa).

Positions 1–24 (MKAFSPVRSVRKNSLSDHGLGISR) are disordered. 2 positions are modified to phosphoserine: S14 and S25. The 53-residue stretch at 23–75 (SRSKTPVDDPMSLLYNMNDCYSKLKELVPSIPQNKKVSKMEILQHVIDYILDL) folds into the bHLH domain. Positions 106–115 (LNTDISILSL) match the Nuclear export signal motif.

As to quaternary structure, interacts with GATA4 and NKX2-5. Interacts with NR0B2. Interacts with CLOCK and BMAL1. Interacts with IFI204. Interacts with NEDD9/HEF1. Interacts with ASB4; this interaction promotes ID2 proteasomal degradation. Post-translationally, ubiquitinated in a ASB4-depedent manner, leading to proteasomal degradation. Phosphorylated in vitro by CDK1, PKA and PKC.

It localises to the cytoplasm. The protein resides in the nucleus. In terms of biological role, transcriptional regulator (lacking a basic DNA binding domain) which negatively regulates the basic helix-loop-helix (bHLH) transcription factors by forming heterodimers and inhibiting their DNA binding and transcriptional activity. Implicated in regulating a variety of cellular processes, including cellular growth, senescence, differentiation, apoptosis, angiogenesis, and neoplastic transformation. Inhibits skeletal muscle and cardiac myocyte differentiation. Regulates the circadian clock by repressing the transcriptional activator activity of the CLOCK-BMAL1 heterodimer. Restricts the CLOCK and BMAL1 localization to the cytoplasm. Plays a role in both the input and output pathways of the circadian clock: in the input component, is involved in modulating the magnitude of photic entrainment and in the output component, contributes to the regulation of a variety of liver clock-controlled genes involved in lipid metabolism. This is DNA-binding protein inhibitor ID-2 (ID2) from Bos taurus (Bovine).